The sequence spans 220 residues: Small ribosomal subunit protein uS2 (220 aa).

This sequence belongs to the universal ribosomal protein uS2 family.

This is Small ribosomal subunit protein uS2 from Methanococcus maripaludis (strain DSM 14266 / JCM 13030 / NBRC 101832 / S2 / LL).